The following is a 91-amino-acid chain: PqqA binding protein (91 aa).

This sequence belongs to the PqqD family. As to quaternary structure, monomer. Interacts with PqqE.

It participates in cofactor biosynthesis; pyrroloquinoline quinone biosynthesis. Functions as a PqqA binding protein and presents PqqA to PqqE, in the pyrroloquinoline quinone (PQQ) biosynthetic pathway. This is PqqA binding protein from Pseudomonas entomophila (strain L48).